A 99-amino-acid chain; its full sequence is Large ribosomal subunit protein uL23c (99 aa).

It belongs to the universal ribosomal protein uL23 family. Part of the 50S ribosomal subunit.

It localises to the plastid. It is found in the chloroplast. Binds to 23S rRNA. This is Large ribosomal subunit protein uL23c (rpl23) from Emiliania huxleyi (Coccolithophore).